Reading from the N-terminus, the 527-residue chain is Inorganic phosphate transporter 1-1 (527 aa).

At 1 to 21 (MAGGQLNVLSTLDQAKTQWYH) the chain is on the cytoplasmic side. The chain crosses the membrane as a helical span at residues 22–42 (FMAIVIAGMGFFTDAYDLFCI). Topologically, residues 43–70 (SLVTKLLGRIYYTDDSKDTPGALPPNVS) are extracellular. The helical transmembrane segment at 71 to 91 (AAVTGVALCGTLAGQLFFGWL) threads the bilayer. Over 92-99 (GDKLGRKS) the chain is Cytoplasmic. Residues 100 to 120 (VYGFTLILMVVCSVASGLSFG) form a helical membrane-spanning segment. Over 121-124 (SSAK) the chain is Extracellular. A helical membrane pass occupies residues 125–145 (GVVSTLCFFRFWLGFGIGGDY). At 146–163 (PLSATIMSEYANKRTRGA) the chain is on the cytoplasmic side. Residues 164–184 (FIAAVFAMQGFGILFGAIVAL) traverse the membrane as a helical segment. At 185–211 (AVSAGFRHAYPAPSYSDNHAASLVPQA) the chain is on the extracellular side. A helical transmembrane segment spans residues 212–232 (DYVWRIILMFGTVPAALTYYW). At 233–292 (RMKMPETARYTALIARNAKQAAADMSKVLHTQIEESADRAETVAVGGESWGLFSRQFLRR) the chain is on the cytoplasmic side. Residues 293-313 (HGLHLLATTSTWFLLDIAFYS) traverse the membrane as a helical segment. The Extracellular segment spans residues 314 to 348 (QNLFQKDIFSKVGWIPPAKTMNALEELYRIARAQA). Residues 349–369 (LIALCGTIPGYWFTVAFIEIM) traverse the membrane as a helical segment. Topologically, residues 370–371 (GR) are cytoplasmic. The chain crosses the membrane as a helical span at residues 372–392 (FWIQIMGFAMMTAFMLGLAIP). Over 393-405 (YHHWTTPGHHTGF) the chain is Extracellular. Residues 406–426 (IVMYGFTFFFANFGPNSTTFI) traverse the membrane as a helical segment. Topologically, residues 427–442 (VPAEIYPARLRSTCHG) are cytoplasmic. A helical transmembrane segment spans residues 443-463 (ISAAAGKAGAIIGAFGFLYAA). Residues 464–481 (QDQHKPEPGYPRGIGIKN) are Extracellular-facing. The helical transmembrane segment at 482–502 (ALFVLAGTNFLGTIMTLLVPE) threads the bilayer. Residues 503–527 (SKGMSLEVISQEVADGDDEEAAYPK) lie on the Cytoplasmic side of the membrane.

Belongs to the major facilitator superfamily. Phosphate:H(+) symporter (TC 2.A.1.9) family. In terms of tissue distribution, expressed in roots, stems and leaves.

It localises to the membrane. Functionally, high-affinity transporter for external inorganic phosphate. Required for phosphate acquisition in plant. This is Inorganic phosphate transporter 1-1 (PHT1-1) from Oryza sativa subsp. japonica (Rice).